The primary structure comprises 110 residues: DNA-directed RNA polymerase subunit omega (110 aa).

It belongs to the RNA polymerase subunit omega family. The RNAP catalytic core consists of 2 alpha, 1 beta, 1 beta' and 1 omega subunit. When a sigma factor is associated with the core the holoenzyme is formed, which can initiate transcription.

The enzyme catalyses RNA(n) + a ribonucleoside 5'-triphosphate = RNA(n+1) + diphosphate. Promotes RNA polymerase assembly. Latches the N- and C-terminal regions of the beta' subunit thereby facilitating its interaction with the beta and alpha subunits. The chain is DNA-directed RNA polymerase subunit omega from Nocardioides sp. (strain ATCC BAA-499 / JS614).